Reading from the N-terminus, the 290-residue chain is DegV domain-containing protein MG450 (290 aa).

The 287-residue stretch at isoleucine 3–threonine 289 folds into the DegV domain. Hexadecanoate contacts are provided by threonine 65 and serine 97.

In terms of biological role, may bind long-chain fatty acids, such as palmitate, and may play a role in lipid transport or fatty acid metabolism. This chain is DegV domain-containing protein MG450, found in Mycoplasma genitalium (strain ATCC 33530 / DSM 19775 / NCTC 10195 / G37) (Mycoplasmoides genitalium).